We begin with the raw amino-acid sequence, 197 residues long: ATP-dependent Clp protease proteolytic subunit 2 (197 aa).

Ser-101 acts as the Nucleophile in catalysis. His-126 is an active-site residue.

Belongs to the peptidase S14 family. As to quaternary structure, fourteen ClpP subunits assemble into 2 heptameric rings which stack back to back to give a disk-like structure with a central cavity, resembling the structure of eukaryotic proteasomes.

The protein resides in the cytoplasm. It catalyses the reaction Hydrolysis of proteins to small peptides in the presence of ATP and magnesium. alpha-casein is the usual test substrate. In the absence of ATP, only oligopeptides shorter than five residues are hydrolyzed (such as succinyl-Leu-Tyr-|-NHMec, and Leu-Tyr-Leu-|-Tyr-Trp, in which cleavage of the -Tyr-|-Leu- and -Tyr-|-Trp bonds also occurs).. Its function is as follows. Cleaves peptides in various proteins in a process that requires ATP hydrolysis. Has a chymotrypsin-like activity. Plays a major role in the degradation of misfolded proteins. This chain is ATP-dependent Clp protease proteolytic subunit 2, found in Trichormus variabilis (strain ATCC 29413 / PCC 7937) (Anabaena variabilis).